Consider the following 335-residue polypeptide: Antigen-presenting glycoprotein CD1d (335 aa).

The first 19 residues, 1–19, serve as a signal peptide directing secretion; it reads MGCLLFLLLWALLQAWGSA. At 20–301 the chain is on the extracellular side; that stretch reads EVPQRLFPLR…VLYWGGSYTS (282 aa). 2 N-linked (GlcNAc...) asparagine glycosylation sites follow: Asn38 and Asn60. Position 98 (Asp98) interacts with a D-galactosylceramide. Disulfide bonds link Cys120–Cys184 and Cys224–Cys279. A glycan (N-linked (GlcNAc...) asparagine) is linked at Asn126. A D-galactosylceramide is bound at residue 169–172; sequence DKWT. The N-linked (GlcNAc...) asparagine glycan is linked to Asn181. Residues 185 to 292 enclose the Ig-like domain; that stretch reads PQFVSGLLES…HSSLEGQDIV (108 aa). The chain crosses the membrane as a helical span at residues 302-322; sequence MGLIALAVLACLLFLLIVGFT. At 323–335 the chain is on the cytoplasmic side; it reads SRFKRQTSYQGVL. The Internalization signal signature appears at 331–334; sequence YQGV.

In terms of assembly, heterodimer with B2M (beta-2-microglobulin). Interacts with MHC II. In terms of tissue distribution, expressed on cortical thymocytes, on certain T-cell leukemias, and in various other tissues.

Its subcellular location is the cell membrane. The protein resides in the basolateral cell membrane. It localises to the endosome membrane. It is found in the lysosome membrane. The protein localises to the endoplasmic reticulum membrane. Antigen-presenting protein that binds self and non-self glycolipids and presents them to T-cell receptors on natural killer T-cells. The protein is Antigen-presenting glycoprotein CD1d (CD1D) of Homo sapiens (Human).